Consider the following 231-residue polypeptide: Large ribosomal subunit protein uL1 (231 aa).

It belongs to the universal ribosomal protein uL1 family. Part of the 50S ribosomal subunit.

Binds directly to 23S rRNA. The L1 stalk is quite mobile in the ribosome, and is involved in E site tRNA release. In terms of biological role, protein L1 is also a translational repressor protein, it controls the translation of the L11 operon by binding to its mRNA. This chain is Large ribosomal subunit protein uL1, found in Pseudomonas aeruginosa (strain LESB58).